A 267-amino-acid polypeptide reads, in one-letter code: L-aspartate dehydrogenase (267 aa).

Residues A124 and N190 each coordinate NAD(+). H220 is a catalytic residue.

The protein belongs to the L-aspartate dehydrogenase family.

It catalyses the reaction L-aspartate + NADP(+) + H2O = oxaloacetate + NH4(+) + NADPH + H(+). The catalysed reaction is L-aspartate + NAD(+) + H2O = oxaloacetate + NH4(+) + NADH + H(+). Its pathway is cofactor biosynthesis; NAD(+) biosynthesis; iminoaspartate from L-aspartate (dehydrogenase route): step 1/1. Its function is as follows. Specifically catalyzes the NAD or NADP-dependent dehydrogenation of L-aspartate to iminoaspartate. The polypeptide is L-aspartate dehydrogenase (Ralstonia pickettii (strain 12J)).